We begin with the raw amino-acid sequence, 379 residues long: Cytochrome b (379 aa).

8 consecutive transmembrane segments (helical) span residues 33–53 (FGSL…FLAM), 77–98 (WLIR…FLHV), 113–133 (WNIG…GYVL), 178–198 (FFAF…VHLL), 226–246 (IKDV…VLFS), 288–308 (LGGV…PILH), 320–340 (LSQC…WIGG), and 347–367 (FITI…LALP). Residues His83 and His97 each contribute to the heme b site. Heme b-binding residues include His182 and His196.

The protein belongs to the cytochrome b family. The cytochrome bc1 complex contains 11 subunits: 3 respiratory subunits (MT-CYB, CYC1 and UQCRFS1), 2 core proteins (UQCRC1 and UQCRC2) and 6 low-molecular weight proteins (UQCRH/QCR6, UQCRB/QCR7, UQCRQ/QCR8, UQCR10/QCR9, UQCR11/QCR10 and a cleavage product of UQCRFS1). This cytochrome bc1 complex then forms a dimer. Heme b serves as cofactor.

It is found in the mitochondrion inner membrane. Component of the ubiquinol-cytochrome c reductase complex (complex III or cytochrome b-c1 complex) that is part of the mitochondrial respiratory chain. The b-c1 complex mediates electron transfer from ubiquinol to cytochrome c. Contributes to the generation of a proton gradient across the mitochondrial membrane that is then used for ATP synthesis. This Sciurus niger (Eastern fox squirrel) protein is Cytochrome b (MT-CYB).